Here is an 864-residue protein sequence, read N- to C-terminus: DNA mismatch repair protein MutS (864 aa).

623-630 serves as a coordination point for ATP; the sequence is GPNMGGKS.

Belongs to the DNA mismatch repair MutS family.

In terms of biological role, this protein is involved in the repair of mismatches in DNA. It is possible that it carries out the mismatch recognition step. This protein has a weak ATPase activity. This is DNA mismatch repair protein MutS from Polaromonas sp. (strain JS666 / ATCC BAA-500).